The following is a 344-amino-acid chain: GTP 3',8-cyclase (344 aa).

The Radical SAM core domain occupies 19 to 244 (PFARPITYLR…TPLAERTGGP (226 aa)). GTP is bound at residue Arg28. Residues Cys35 and Cys39 each contribute to the [4Fe-4S] cluster site. Tyr41 contacts S-adenosyl-L-methionine. Cys42 is a [4Fe-4S] cluster binding site. Position 77 (Arg77) interacts with GTP. Gly81 provides a ligand contact to S-adenosyl-L-methionine. Thr110 is a binding site for GTP. An S-adenosyl-L-methionine-binding site is contributed by Ser134. Lys170 contacts GTP. Met204 is a binding site for S-adenosyl-L-methionine. Cys268 and Cys271 together coordinate [4Fe-4S] cluster. A GTP-binding site is contributed by 273–275 (RVR). Cys285 is a [4Fe-4S] cluster binding site.

Belongs to the radical SAM superfamily. MoaA family. As to quaternary structure, monomer and homodimer. Requires [4Fe-4S] cluster as cofactor.

It catalyses the reaction GTP + AH2 + S-adenosyl-L-methionine = (8S)-3',8-cyclo-7,8-dihydroguanosine 5'-triphosphate + 5'-deoxyadenosine + L-methionine + A + H(+). It participates in cofactor biosynthesis; molybdopterin biosynthesis. Functionally, catalyzes the cyclization of GTP to (8S)-3',8-cyclo-7,8-dihydroguanosine 5'-triphosphate. In Paracoccus denitrificans (strain Pd 1222), this protein is GTP 3',8-cyclase.